Reading from the N-terminus, the 167-residue chain is Centrin-3 (167 aa).

EF-hand domains lie at 25–60 (EQKQEIKDAFELFDTDKDEAIDYHELKVAMRALGFD), 61–96 (VKKADVLKILKDYDREATGKITFEDFNEVVTDWILE), 98–133 (DPHEEILKAFKLFDDDDSGKISLRNLRRVARELGEN), and 134–167 (MSDEELRAMIEEFDKDGDGEINQEEFIAIMTGDI). At Ser-135 the chain carries Phosphoserine. Ca(2+) is bound by residues Asp-147, Asp-149, Asp-151, Glu-153, and Glu-158.

This sequence belongs to the centrin family. Monomer. Component of the nuclear pore complex (NPC)-associated TREX-2 complex (transcription and export complex 2), composed of at least GANP, 2 copies of ENY2, PCID2, SEM1/DSS1, and either centrin CETN2 or centrin CETN3. The TREX-2 complex also associates with ALYREF/ALY and with the nucleoporin NUP153. Interacts with USP49.

The protein localises to the cytoplasm. It localises to the cytoskeleton. The protein resides in the microtubule organizing center. Its subcellular location is the centrosome. It is found in the nucleus. The protein localises to the nucleolus. It localises to the nucleus envelope. The protein resides in the nuclear pore complex. Its subcellular location is the centriole. Functionally, plays a fundamental role in microtubule-organizing center structure and function. Its function is as follows. As a component of the TREX-2 complex, involved in the export of mRNAs to the cytoplasm through the nuclear pores. The chain is Centrin-3 (CETN3) from Homo sapiens (Human).